A 1426-amino-acid chain; its full sequence is A disintegrin and metalloproteinase with thrombospondin motifs 13 (1426 aa).

Residues 1–33 (MSQLCLWLTCQPCYAVSVRGILTGAIFILGCWG) form the signal peptide. Positions 34 to 76 (LSDFQKSLLQDLEPKDVSSYFGHHAAPFTGHPPSHLQRLRRRR) are excised as a propeptide. The region spanning 74 to 291 (RRRTLEDILH…GQMHCFQDPP (218 aa)) is the Peptidase M12B domain. A Ca(2+)-binding site is contributed by E85. 2 N-linked (GlcNAc...) asparagine glycosylation sites follow: N144 and N148. 3 cysteine pairs are disulfide-bonded: C157-C210, C204-C286, and C246-C270. The Ca(2+) site is built by D175, D184, E186, D189, and E214. A Zn(2+)-binding site is contributed by H226. E227 is a catalytic residue. Zn(2+)-binding residues include H230 and H236. Residues T281 and D289 each coordinate Ca(2+). The Disintegrin domain maps to 295–388 (SGLTRHQLMA…LAELAPVAAV (94 aa)). Intrachain disulfides connect C316–C342, C327–C352, C337–C371, C365–C376, C401–C438, C405–C443, C416–C428, C488–C527, C513–C532, C537–C553, and C550–C560. One can recognise a TSP type-1 1 domain in the interval 389 to 444 (HGHWSSWGPHSPCSRSCGGGVITRRRWCNNPRPAFGGRACVGEDLQAKMCNTQACE). Residues 445-561 (KTQLEFMSEQ…VCGGDNSTCS (117 aa)) are cysteine-rich. The Cell attachment site signature appears at 503-505 (RGD). Residues 556–685 (DNSTCSSRNG…PDITFSYFQL (130 aa)) are spacer. 4 N-linked (GlcNAc...) asparagine glycosylation sites follow: N557, N564, N584, and N619. 7 consecutive TSP type-1 domains span residues 687–746 (QQAA…VSAP), 747–810 (CSPY…QPCP), 808–871 (PCPT…SLCS), 904–957 (WTPL…RARP), 958–1019 (CPAR…EPCP), 1020–1078 (ARWK…IADC), and 1079–1137 (AFRW…GPCA). O-linked (Fuc...) serine glycans are attached at residues S703 and S762. A glycan (N-linked (GlcNAc...) asparagine) is linked at N834. S914 carries an O-linked (Fuc...) serine glycan. O-linked (Fuc...) threonine glycosylation occurs at T973. Residue S1033 is glycosylated (O-linked (Fuc...) serine). N1057 carries an N-linked (GlcNAc...) asparagine glycan. Residue S1093 is glycosylated (O-linked (Fuc...) serine). CUB domains lie at 1195–1302 (ACGR…FYKE) and 1293–1426 (QPAP…LALS).

Zn(2+) is required as a cofactor. The cofactor is Ca(2+). Post-translationally, the precursor is processed by a furin endopeptidase which cleaves off the pro-domain. O-glycosylated. O-fucosylated by POFUT2 on a serine or a threonine residue found within the consensus sequence C1-X(2)-(S/T)-C2-G of the TSP type-1 repeat domains where C1 and C2 are the first and second cysteine residue of the repeat, respectively. Fucosylated repeats can then be further glycosylated by the addition of a beta-1,3-glucose residue by the glucosyltransferase, B3GALTL. Fucosylation mediates the efficient secretion of ADAMTS13. May also be C-glycosylated on tryptophan residues within the consensus sequence W-X-X-W of the TPRs, and also N-glycosylated. These other glycosylations can also facilitate secretion. As to expression, plasma. Expression is consistently high in liver, medium in lung and spleen, low in skeletal muscle and undetectable in heart, brain, kidney and testis.

The protein localises to the secreted. The catalysed reaction is The enzyme cleaves the von Willebrand factor at bond 842-Tyr-|-Met-843 within the A2 domain.. Zinc and calcium ions cooperatively modulate enzyme activity. The cleavage of the pro-domain is not required for protease activity. Dependence on calcium for proteolytic activity is mediated by the high affinity site. Its function is as follows. Cleaves the vWF multimers in plasma into smaller forms thereby controlling vWF-mediated platelet thrombus formation. The protein is A disintegrin and metalloproteinase with thrombospondin motifs 13 (Adamts13) of Mus musculus (Mouse).